We begin with the raw amino-acid sequence, 187 residues long: Putative protein SSX8 (187 aa).

2 disordered regions span residues 1–21 and 109–187; these read MNGDDAFAKRPRDDDKASEKR and PKIM…EDDE. Residues 20–83 form the KRAB-related domain; that stretch reads KRSKAFNDIA…KQATDFQGNY (64 aa). Ser-123 is modified (phosphoserine). The segment covering 152–168 has biased composition (basic residues); that stretch reads KRSGPKRGRHAWTHRLR.

This sequence belongs to the SSX family. As to expression, not detected in any normal or tumor tissues.

Could act as a modulator of transcription. This Homo sapiens (Human) protein is Putative protein SSX8.